Consider the following 482-residue polypeptide: Reduced viability upon starvation protein 167 (482 aa).

N-acetylserine is present on Ser-2. The BAR domain maps to 17-254 (FRQKFKMGEQ…YFDLNSDIVE (238 aa)). Coiled-coil stretches lie at residues 31–64 (VYED…NGML) and 174–204 (AKDE…LKTQ). Lys-242 is covalently cross-linked (Glycyl lysine isopeptide (Lys-Gly) (interchain with G-Cter in ubiquitin)). Residues Ser-299, Ser-321, and Ser-379 each carry the phosphoserine; by FUS3 and PHO85 modification. A disordered region spans residues 382-407 (LTGLGFQQSPQQQQGPPPAYSNPLTS). The SH3 domain maps to 421 to 482 (PGVETVTALY…PGNYVQLNKN (62 aa)). Lys-481 participates in a covalent cross-link: Glycyl lysine isopeptide (Lys-Gly) (interchain with G-Cter in ubiquitin).

In terms of assembly, binds to actin. Interacts with ABP1, GYL1, GYP5, PCL2 and YBR108W. Post-translationally, phosphorylated redundantly by cyclin-dependent kinase PHO85 in association with PCL1,2-type cyclins or by MAP kinase FUS3. Phosphorylation inhibits interaction with complexes involved in actin cytoskeleton function.

The protein resides in the cytoplasm. Its subcellular location is the cytoskeleton. Its function is as follows. Component of a cytoskeletal structure that is required for the formation of endocytic vesicles at the plasma membrane level. Could be implicated in cytoskeletal reorganization in response to environmental stresses and could act in the budding site selection mechanism. The chain is Reduced viability upon starvation protein 167 (RVS167) from Saccharomyces cerevisiae (strain ATCC 204508 / S288c) (Baker's yeast).